The following is an 889-amino-acid chain: Potassium/sodium hyperpolarization-activated cyclic nucleotide-gated channel 2 (889 aa).

Residues 1 to 10 are compositionally biased toward gly residues; that stretch reads MDARGGGGRP. The segment at 1 to 159 is disordered; it reads MDARGGGGRP…GPAGEPRGSQ (159 aa). The Cytoplasmic segment spans residues 1–215; it reads MDARGGGGRP…PYSDFRFYWD (215 aa). The span at 17–55 shows a compositional bias: pro residues; that stretch reads TPAPGPPPPPPPAPPQQQPPPPPPPAPPPGPGPAPPQHP. Over residues 129-155 the composition is skewed to low complexity; sequence GAASGPAPGPGPAEEAGSEEAGPAGEP. 2 positions are modified to phosphoserine: S146 and S161. An involved in subunit assembly region spans residues 158 to 209; sequence SQASFMQRQFGALLQPGVNKFSLRMFGSQKAVEREQERVKSAGAWIIHPYSD. The chain crosses the membrane as a helical span at residues 216–236; that stretch reads FTMLLFMVGNLIIIPVGITFF. Over 237 to 240 the chain is Extracellular; the sequence is KDET. A helical transmembrane segment spans residues 241–261; sequence TAPWIVFNVVSDTFFLMDLVL. At 262-288 the chain is on the cytoplasmic side; that stretch reads NFRTGIVIEDNTEIILDPEKIKKKYLR. The chain crosses the membrane as a helical span at residues 289-309; it reads TWFVVDFVSSIPVDYIFLIVE. The Extracellular portion of the chain corresponds to 310 to 317; it reads KGIDSEVY. The chain crosses the membrane as a helical; Voltage-sensor span at residues 318–338; it reads KTARALRIVRFTKILSLLRLL. Over 339–369 the chain is Cytoplasmic; sequence RLSRLIRYIHQWEEIFHMTYDLASAVMRICN. A helical membrane pass occupies residues 370 to 390; that stretch reads LISMMLLLCHWDGCLQFLVPM. At 391 to 413 the chain is on the extracellular side; sequence LQDFPRNCWVSINGMVNHSWSEL. N-linked (GlcNAc...) asparagine glycosylation is present at N407. Residues 414–435 constitute an intramembrane region (pore-forming); that stretch reads YSFALFKAMSHMLCIGYGRQAP. Over 436–440 the chain is Extracellular; sequence ESMTD. Residues 441 to 461 form a helical membrane-spanning segment; it reads IWLTMLSMIVGATCYAMFIGH. Residues 462 to 889 lie on the Cytoplasmic side of the membrane; the sequence is ATALIQSLDS…SARSRLSSNL (428 aa). The 3',5'-cyclic AMP site is built by M599, G608, E609, I610, C611, R618, T619, and R659. Phosphoserine; by PKG/PRKG2 is present on S668. At S754 the chain carries Phosphoserine. A disordered region spans residues 754–889; sequence SPRLVRRPPP…SARSRLSSNL (136 aa). Residue R756 is modified to Omega-N-methylarginine. Residues 760–784 show a composition bias toward pro residues; it reads RPPPGPAPAAASPGPPPPASPPGAP. 5 positions are modified to phosphoserine: S771, S779, S786, S866, and S868. Over residues 785-860 the composition is skewed to low complexity; it reads ASPRAPRTSP…TPAARAAAPS (76 aa).

The protein belongs to the potassium channel HCN family. Homotetramer. The channel is composed of a homo- or heterotetrameric complex of pore-forming subunits. Heterotetramer with HCN1. Forms an obligate 4:4 complex with accessory subunit PEX5L. Interacts with KCNE2. Post-translationally, phosphorylation at Ser-668 by PRKG2 shifts the voltage-dependence to more negative voltages, hence counteracting the stimulatory effect of cGMP on gating. S-palmitoylated. In terms of processing, N-glycosylated; required for cell surface trafficking of HCN2. In terms of tissue distribution, highly expressed throughout the brain. Detected at low levels in heart.

It is found in the cell membrane. The enzyme catalyses Na(+)(in) = Na(+)(out). It catalyses the reaction K(+)(in) = K(+)(out). It carries out the reaction NH4(+)(in) = NH4(+)(out). With respect to regulation, activated by cAMP, and at 10-100 times higher concentrations, also by cGMP. cAMP binding causes a conformation change that leads to the assembly of an active tetramer and channel opening. Binding of cAMP removes a tonic inhibition conferred by cyclic nucleotide-binding domain (CNBD) on channel opening. Channel activity is modulated by intracellular chloride ions and pH; acidic pH shifts the activation to more negative voltages. Inhibited by extracellular cesium ions. Hyperpolarization-activated ion channel that is permeable to sodium and potassium ions. Displays lower selectivity for K(+) over Na(+) ions. Contributes to the native pacemaker currents in heart (If) and in neurons (Ih). Can also transport ammonium in the distal nephron. Involved in the initiation of neuropathic pain in sensory neurons. The chain is Potassium/sodium hyperpolarization-activated cyclic nucleotide-gated channel 2 from Homo sapiens (Human).